We begin with the raw amino-acid sequence, 385 residues long: O-phospho-L-seryl-tRNA:Cys-tRNA synthase (385 aa).

Pyridoxal 5'-phosphate contacts are provided by residues 89 to 90, asparagine 195, and 218 to 220; these read AR and SGH. Lysine 221 carries the post-translational modification N6-(pyridoxal phosphate)lysine.

The protein belongs to the SepCysS family. As to quaternary structure, homodimer. Interacts with SepRS. Requires pyridoxal 5'-phosphate as cofactor.

The catalysed reaction is O-phospho-L-seryl-tRNA(Cys) + hydrogen sulfide + H(+) = L-cysteinyl-tRNA(Cys) + phosphate. Functionally, converts O-phospho-L-seryl-tRNA(Cys) (Sep-tRNA(Cys)) to L-cysteinyl-tRNA(Cys) (Cys-tRNA(Cys)). The sequence is that of O-phospho-L-seryl-tRNA:Cys-tRNA synthase from Methanococcus aeolicus (strain ATCC BAA-1280 / DSM 17508 / OCM 812 / Nankai-3).